The sequence spans 249 residues: Segregation and condensation protein A (249 aa).

This sequence belongs to the ScpA family. Component of a cohesin-like complex composed of ScpA, ScpB and the Smc homodimer, in which ScpA and ScpB bind to the head domain of Smc. The presence of the three proteins is required for the association of the complex with DNA.

The protein resides in the cytoplasm. Functionally, participates in chromosomal partition during cell division. May act via the formation of a condensin-like complex containing Smc and ScpB that pull DNA away from mid-cell into both cell halves. This is Segregation and condensation protein A from Listeria monocytogenes serotype 4a (strain HCC23).